A 32-amino-acid polypeptide reads, in one-letter code: Alcohol dehydrogenase-related 31 kDa protein (32 aa).

Residue 11-32 participates in NAD(+) binding; it reads YVADCGGIALETSXVLMTKNIA.

It belongs to the short-chain dehydrogenases/reductases (SDR) family.

The sequence is that of Alcohol dehydrogenase-related 31 kDa protein (Adhr) from Drosophila yakuba (Fruit fly).